The chain runs to 372 residues: NAD(P)H-quinone oxidoreductase subunit 1 (372 aa).

8 helical membrane-spanning segments follow: residues 31–51 (PLPMLIMLLAATVSVLVVVWL), 65–85 (PEFIGPLGVLAPLADGLKLVL), 97–117 (LLFTLGPAIVVIPVFLSYLIL), 128–148 (VGLGIFLWIALSSVVPIGLLM), 176–196 (LALSVLAVVMMSNSLSTVDIV), 254–276 (FALFYLGSYVNLTLSALLFAVLY), 304–324 (LIFATIGIGMTLLKAYFLIFL), and 347–367 (FLLPVSLVNLLITAGLKLAFP).

Belongs to the complex I subunit 1 family. In terms of assembly, NDH-1 is composed of at least 11 different subunits.

The protein resides in the cellular thylakoid membrane. It carries out the reaction a plastoquinone + NADH + (n+1) H(+)(in) = a plastoquinol + NAD(+) + n H(+)(out). It catalyses the reaction a plastoquinone + NADPH + (n+1) H(+)(in) = a plastoquinol + NADP(+) + n H(+)(out). NDH-1 shuttles electrons from an unknown electron donor, via FMN and iron-sulfur (Fe-S) centers, to quinones in the respiratory and/or the photosynthetic chain. The immediate electron acceptor for the enzyme in this species is believed to be plastoquinone. Couples the redox reaction to proton translocation, and thus conserves the redox energy in a proton gradient. This is NAD(P)H-quinone oxidoreductase subunit 1 from Leptolyngbya boryana (Plectonema boryanum).